Reading from the N-terminus, the 78-residue chain is MAGRKGGRGKRRKVCYFTANNITHIDYKDVDLLKKFISERGKILPRRVTGTSAKYQRKLTVAIKRARQMALLPYVADE.

This sequence belongs to the bacterial ribosomal protein bS18 family. Part of the 30S ribosomal subunit. Forms a tight heterodimer with protein bS6.

Binds as a heterodimer with protein bS6 to the central domain of the 16S rRNA, where it helps stabilize the platform of the 30S subunit. The protein is Small ribosomal subunit protein bS18 of Geobacillus kaustophilus (strain HTA426).